The primary structure comprises 367 residues: Peptide chain release factor 2 (367 aa).

Glutamine 250 carries the post-translational modification N5-methylglutamine.

Belongs to the prokaryotic/mitochondrial release factor family. In terms of processing, methylated by PrmC. Methylation increases the termination efficiency of RF2.

It localises to the cytoplasm. Its function is as follows. Peptide chain release factor 2 directs the termination of translation in response to the peptide chain termination codons UGA and UAA. The polypeptide is Peptide chain release factor 2 (Saccharopolyspora erythraea (strain ATCC 11635 / DSM 40517 / JCM 4748 / NBRC 13426 / NCIMB 8594 / NRRL 2338)).